The primary structure comprises 68 residues: Agnoprotein (68 aa).

The Cytoplasmic segment spans residues 1 to 24; that stretch reads MVLRQLSRQASVKVGKTWTGTKRR. Phosphoserine; by host is present on residues S7 and S11. T21 is subject to Phosphothreonine; by host. The helical; Signal-anchor for type II membrane protein transmembrane segment at 25–41 threads the bilayer; that stretch reads AQRIFIFILELLLDFCR. At 42-68 the chain is on the extracellular side; sequence GEDSVDGKKKKDSLTDKTETVTEKKES. The disordered stretch occupies residues 44-68; that stretch reads DSVDGKKKKDSLTDKTETVTEKKES.

This sequence belongs to the polyomavirus agnoprotein family. In terms of assembly, homooligomer. Interacts with VP1. Interacts with large T antigen; this interaction may impact upon the activity of T-antigen on the control of viral gene transcription and replication. Interacts with small t antigen. Interacts with host CBX5; this interaction induces the dissociation of CBX5 from LBR, resulting in destabilization of the nuclear envelope. Phosphorylated by host PKC. Phosphorylation alters the stability and may also have an impact on the subcellular location.

The protein resides in the host cytoplasm. It is found in the host nucleus membrane. It localises to the host rough endoplasmic reticulum membrane. The protein localises to the host cell membrane. Its function is as follows. Alters the structure of the nuclear envelope by interacting with host CBX5 and disrupting CBX5 association with LBR. Involved in the perinuclear-nuclear localization of the capsid protein VP1 during virion assembly and maturation. Plays an important role in the release of progeny virions from infected cells and in viral propagation, probably by acting as a viral ionic channel in the host plasma membrane. Allows influx of extracellular calcium ions in the host cell. May contribute to viral genome transcription and translation of viral late proteins. This Simian virus 12 (strain wt100) (SV-12) protein is Agnoprotein.